The sequence spans 282 residues: MIKDYKVSIAIPIALLILSILLIGFKGIPKSIDITGGTEITIKVNENMDITPLKESLNGIAEVKKLESADGYYIVIRCKNEDVDIVKQKIKEFFHVDSLDKLNYSEKTIGATLSSKFFEEGFKAVGFAFMFMAIVVYLYFRNPVPSGAIILSALSDIIMALGAMSLLGIELSSATIAALLMVIGYSVDSDILLTTRVLKRLTKSFDETVKEAMKTGLTMTLTTITAMLILLIVVKLFIPVADILANIATVLILALIADIINTWLLNAGILKYYITEYRAKKI.

The next 6 membrane-spanning stretches (helical) occupy residues 9–29 (IAIPIALLILSILLIGFKGIP), 120–140 (EGFKAVGFAFMFMAIVVYLYF), 149–169 (IILSALSDIIMALGAMSLLGI), 174–194 (ATIAALLMVIGYSVDSDILLT), 214–234 (KTGLTMTLTTITAMLILLIVV), and 236–256 (LFIPVADILANIATVLILALI).

Belongs to the SecD/SecF family. SecF subfamily. In terms of assembly, part of the protein translocation apparatus. Forms a complex with SecD.

The protein resides in the cell membrane. Functionally, involved in protein export. The chain is Protein-export membrane protein SecF from Methanocaldococcus jannaschii (strain ATCC 43067 / DSM 2661 / JAL-1 / JCM 10045 / NBRC 100440) (Methanococcus jannaschii).